A 313-amino-acid polypeptide reads, in one-letter code: uncharacterized protein (313 aa).

3 helical membrane-spanning segments follow: residues 19-41 (GLAVAIALITAIAWFPDGLAGFL), 51-68 (AIIGAILTILGLSIIFFL), and 81-103 (IAEFGFIVLTLIFSLIVFNDFAI).

The protein resides in the cell membrane. This is an uncharacterized protein from Aquifex aeolicus (strain VF5).